The sequence spans 381 residues: Succinyl-diaminopimelate desuccinylase (381 aa).

Zn(2+) is bound at residue H69. Residue D71 is part of the active site. Zn(2+) is bound at residue D103. E137 functions as the Proton acceptor in the catalytic mechanism. Zn(2+)-binding residues include E138, E166, and H355.

This sequence belongs to the peptidase M20A family. DapE subfamily. As to quaternary structure, homodimer. Zn(2+) serves as cofactor. The cofactor is Co(2+).

It carries out the reaction N-succinyl-(2S,6S)-2,6-diaminopimelate + H2O = (2S,6S)-2,6-diaminopimelate + succinate. It functions in the pathway amino-acid biosynthesis; L-lysine biosynthesis via DAP pathway; LL-2,6-diaminopimelate from (S)-tetrahydrodipicolinate (succinylase route): step 3/3. In terms of biological role, catalyzes the hydrolysis of N-succinyl-L,L-diaminopimelic acid (SDAP), forming succinate and LL-2,6-diaminopimelate (DAP), an intermediate involved in the bacterial biosynthesis of lysine and meso-diaminopimelic acid, an essential component of bacterial cell walls. This Rickettsia akari (strain Hartford) protein is Succinyl-diaminopimelate desuccinylase.